The primary structure comprises 205 residues: Glycerol-3-phosphate acyltransferase (205 aa).

5 helical membrane-spanning segments follow: residues 4 to 24 (IAPG…AILV), 80 to 100 (PFWL…PVFF), 107 to 127 (GVAT…GVMA), 130 to 150 (WLLT…SALI), and 155 to 175 (VWWF…LILL).

Belongs to the PlsY family. As to quaternary structure, probably interacts with PlsX.

It is found in the cell inner membrane. The catalysed reaction is an acyl phosphate + sn-glycerol 3-phosphate = a 1-acyl-sn-glycero-3-phosphate + phosphate. The protein operates within lipid metabolism; phospholipid metabolism. Functionally, catalyzes the transfer of an acyl group from acyl-phosphate (acyl-PO(4)) to glycerol-3-phosphate (G3P) to form lysophosphatidic acid (LPA). This enzyme utilizes acyl-phosphate as fatty acyl donor, but not acyl-CoA or acyl-ACP. This is Glycerol-3-phosphate acyltransferase from Klebsiella pneumoniae subsp. pneumoniae (strain ATCC 700721 / MGH 78578).